The chain runs to 213 residues: Major fimbrial subunit (213 aa).

Positions 1–20 are cleaved as a signal peptide; the sequence is MKKTLLGSLILLAFAGNVQA. A disulfide bridge connects residues C41 and C81.

The protein belongs to the fimbrial protein family.

It localises to the fimbrium. In terms of biological role, mediates adherence to oropharyngeal epithelial cells. Helps the airway colonization process. This is Major fimbrial subunit (hifA) from Haemophilus influenzae.